We begin with the raw amino-acid sequence, 36 residues long: Phospholipase A2 hemilipin-2 (36 aa).

Belongs to the phospholipase A2 family. Group III subfamily. As to quaternary structure, heterodimer composed of a small subunit and a large subunit; disulfid-linked. It depends on Ca(2+) as a cofactor. As to expression, expressed by the venom gland.

The protein localises to the secreted. The enzyme catalyses a 1,2-diacyl-sn-glycero-3-phosphocholine + H2O = a 1-acyl-sn-glycero-3-phosphocholine + a fatty acid + H(+). Functionally, scorpion venom phospholipase A2 (PLA2) that impacts angiogenesis in vitro and in vivo without showing any cytotoxic or apoptotic signs. The antiangiogenic effect is independent from the catalytic activity and seems to be held by its small subunit. PLA2 catalyzes the calcium-dependent hydrolysis of the 2-acyl groups in 3-sn-phosphoglycerides. The protein is Phospholipase A2 hemilipin-2 of Hemiscorpius lepturus (Scorpion).